The sequence spans 67 residues: Large ribosomal subunit protein uL29 (67 aa).

It belongs to the universal ribosomal protein uL29 family.

The polypeptide is Large ribosomal subunit protein uL29 (Methanosarcina acetivorans (strain ATCC 35395 / DSM 2834 / JCM 12185 / C2A)).